A 116-amino-acid polypeptide reads, in one-letter code: uncharacterized protein (116 aa).

A helical membrane pass occupies residues 20-42 (YLNKYYSVITYFLAFLTKFAILL). Residues 95–116 (IEFQSKSSPVPPASESNKGINE) are disordered.

It localises to the membrane. This is an uncharacterized protein from Saccharomyces cerevisiae (strain ATCC 204508 / S288c) (Baker's yeast).